The sequence spans 350 residues: Alcohol dehydrogenase 1 (350 aa).

Zn(2+) is bound by residues C44, T46, H67, C98, C101, C104, C112, and C154. T46 and H67 together coordinate an alcohol. T46 contacts NAD(+). NAD(+)-binding positions include 178-182 (GAGGG), D202, K207, 271-273 (IGL), and R343.

The protein belongs to the zinc-containing alcohol dehydrogenase family. Homotetramer. Requires Zn(2+) as cofactor.

It localises to the cytoplasm. It is found in the secreted. The catalysed reaction is a primary alcohol + NAD(+) = an aldehyde + NADH + H(+). It catalyses the reaction a secondary alcohol + NAD(+) = a ketone + NADH + H(+). The sequence is that of Alcohol dehydrogenase 1 (alcA) from Emericella nidulans (strain FGSC A4 / ATCC 38163 / CBS 112.46 / NRRL 194 / M139) (Aspergillus nidulans).